The primary structure comprises 615 residues: Protein translocase subunit SecD (615 aa).

Helical transmembrane passes span 10 to 30 (YVML…NLFG), 452 to 472 (QGLE…IIFY), 477 to 497 (LIAT…MSLL), 504 to 524 (MPGI…NVLI), 548 to 570 (GAFS…LYAV), and 585 to 605 (GVAT…NLLY).

It belongs to the SecD/SecF family. SecD subfamily. In terms of assembly, forms a complex with SecF. Part of the essential Sec protein translocation apparatus which comprises SecA, SecYEG and auxiliary proteins SecDF-YajC and YidC.

Its subcellular location is the cell inner membrane. In terms of biological role, part of the Sec protein translocase complex. Interacts with the SecYEG preprotein conducting channel. SecDF uses the proton motive force (PMF) to complete protein translocation after the ATP-dependent function of SecA. In Shigella flexneri, this protein is Protein translocase subunit SecD.